Consider the following 703-residue polypeptide: Probable boron transporter 2 (703 aa).

The Cytoplasmic segment spans residues 1-35; it reads MEETFVPFEGIKNDLKGRLMCYKQDWTGGIKAGFR. A helical membrane pass occupies residues 36–56; sequence ILAPTTYIFFASAIPVISFGE. At 57–75 the chain is on the extracellular side; sequence QLERSTDGVLTAVQTLAST. The helical transmembrane segment at 76 to 96 threads the bilayer; it reads AICGIIHSIIGGQPLLILGVA. At 97–120 the chain is on the cytoplasmic side; the sequence is EPTVIMYTFMFNFAKGRPELGRNL. A helical membrane pass occupies residues 121 to 141; that stretch reads FLAWSGWVCVWTSLILFVLAI. Residues 142-155 are Extracellular-facing; sequence CGACSFINRFTRVA. A helical transmembrane segment spans residues 156–176; it reads GELFGLLIAMLFMQQAIKGLV. Residues 177–195 are Cytoplasmic-facing; that stretch reads DEFRAPAREDLKLVEFLPS. The helical transmembrane segment at 196 to 216 threads the bilayer; sequence WRFANGMFALVLSFGLLITAL. The Extracellular portion of the chain corresponds to 217–233; that stretch reads RSRKARSWRYGTGWLRS. Residues 234-254 traverse the membrane as a helical segment; it reads LVADYGVPLMVLVWTGVSYIP. Topologically, residues 255-289 are cytoplasmic; that stretch reads TGDVPKGIPRRLFSPNPWSPGAYENWTVVKEMLQV. Residues 290–310 traverse the membrane as a helical segment; that stretch reads PIVYIIGAFIPATMIAVLYYF. Residues 311-337 are Extracellular-facing; it reads DHSVASQLAQQKEFNLRKPSSYHYDLL. A helical transmembrane segment spans residues 338-358; the sequence is LLGFLTLMCGLLGIPPSNGVI. Residues 359-480 are Cytoplasmic-facing; it reads PQSPMHTKSL…AVMVGGCVAA (122 aa). A helical transmembrane segment spans residues 481–501; the sequence is MPLLKMIPTSVLWGYFAFMAI. Over 502 to 557 the chain is Extracellular; it reads ESLPGNQFWERILLLFTAPSRRFKVLEDNHATFVETVPFKTIAMFTIFQTTYLLTC. Residues 558-578 traverse the membrane as a helical segment; that stretch reads FGLTWIPIAGVMFPLLIMFLI. Over 579 to 703 the chain is Cytoplasmic; sequence PVRQYILPRF…SPLNPSSSSK (125 aa). Positions 678–703 are disordered; it reads EMSPRLSGKGQNSPKPSPLNPSSSSK.

This sequence belongs to the anion exchanger (TC 2.A.31.3) family.

The protein resides in the membrane. In terms of biological role, probable boron transporter. Boron is essential for maintaining the integrity of plants cell walls. The polypeptide is Probable boron transporter 2 (BOR2) (Arabidopsis thaliana (Mouse-ear cress)).